Reading from the N-terminus, the 130-residue chain is Small ribosomal subunit protein uS8 (130 aa).

This sequence belongs to the universal ribosomal protein uS8 family. As to quaternary structure, part of the 30S ribosomal subunit. Contacts proteins S5 and S12.

Functionally, one of the primary rRNA binding proteins, it binds directly to 16S rRNA central domain where it helps coordinate assembly of the platform of the 30S subunit. This Vibrio campbellii (strain ATCC BAA-1116) protein is Small ribosomal subunit protein uS8.